The sequence spans 115 residues: MISKPDKNKLRQKRHTRVRGKISGTSETPRLNVFRSNTNIYAQVIDDVTGTTLASASSLKLTGTKTEQAAEVGKLVAEAAKAKGVEEVVFDRGGYLYHGRVAALATAAREAGLKF.

Residues 1–29 form a disordered region; that stretch reads MISKPDKNKLRQKRHTRVRGKISGTSETP. Basic residues predominate over residues 10–20; sequence LRQKRHTRVRG.

It belongs to the universal ribosomal protein uL18 family. In terms of assembly, part of the 50S ribosomal subunit; part of the 5S rRNA/L5/L18/L25 subcomplex. Contacts the 5S and 23S rRNAs.

In terms of biological role, this is one of the proteins that bind and probably mediate the attachment of the 5S RNA into the large ribosomal subunit, where it forms part of the central protuberance. This is Large ribosomal subunit protein uL18 from Lactococcus lactis subsp. lactis (strain IL1403) (Streptococcus lactis).